The chain runs to 347 residues: Ferrochelatase (347 aa).

Cysteine 158 is a [2Fe-2S] cluster binding site. The Fe cation site is built by histidine 193 and glutamate 272. [2Fe-2S] cluster-binding residues include cysteine 332, cysteine 339, and cysteine 341.

It belongs to the ferrochelatase family. Homodimer. Requires [2Fe-2S] cluster as cofactor.

Its subcellular location is the cytoplasm. The enzyme catalyses heme b + 2 H(+) = protoporphyrin IX + Fe(2+). It functions in the pathway porphyrin-containing compound metabolism; protoheme biosynthesis; protoheme from protoporphyrin-IX: step 1/1. Functionally, catalyzes the ferrous insertion into protoporphyrin IX. The sequence is that of Ferrochelatase from Caulobacter vibrioides (strain ATCC 19089 / CIP 103742 / CB 15) (Caulobacter crescentus).